We begin with the raw amino-acid sequence, 378 residues long: Cell death-related nuclease 6 (378 aa).

The N-terminal stretch at 1–17 (MIRQIILIVSLIGISNA) is a signal peptide. 3 N-linked (GlcNAc...) asparagine glycosylation sites follow: Asn-51, Asn-92, and Asn-111.

This sequence belongs to the DNase II family.

In terms of biological role, involved in apoptotic DNA degradation. The protein is Cell death-related nuclease 6 (crn-6) of Caenorhabditis elegans.